The chain runs to 102 residues: Large ribosomal subunit protein bL21 (102 aa).

This sequence belongs to the bacterial ribosomal protein bL21 family. Part of the 50S ribosomal subunit. Contacts protein L20.

In terms of biological role, this protein binds to 23S rRNA in the presence of protein L20. This Pseudarthrobacter chlorophenolicus (strain ATCC 700700 / DSM 12829 / CIP 107037 / JCM 12360 / KCTC 9906 / NCIMB 13794 / A6) (Arthrobacter chlorophenolicus) protein is Large ribosomal subunit protein bL21.